A 366-amino-acid chain; its full sequence is MQVMRTFNQPPTSSHPTPTLNDSDTCITLYNHRGYARVLMPLFYCIVFFVGLLGNALAFHIIRPNVKKINSTTLYSANLVISDILFTLSLPLRIIYYALGFHWPLGETLCKIVGLIFYINTYAGVNFMTCLSVDRFIAVVLPLRFARFRKVSNVRYICVGVWLLVLMQTLPLLSMPMTNEEPDGFITCMEYPNFEPVPNISYILIGAVFLGYGVPVVTILVCYSILCCKLRLAAKANQLTDKSGRSQKAIGVICCVSLVFVVCFSPYHIDLLQYMIRKLIYTPDCAELTAFQISLHFTVCLMNLNSCLDPFIYFFACKGYKTKVLKILKRQVSVSFSSAARTLPEGLSRDISDGNKIHLNSTRHKE.

The Extracellular portion of the chain corresponds to 1–37; sequence MQVMRTFNQPPTSSHPTPTLNDSDTCITLYNHRGYAR. An N-linked (GlcNAc...) asparagine glycan is attached at Asn21. A helical transmembrane segment spans residues 38–63; that stretch reads VLMPLFYCIVFFVGLLGNALAFHIIR. Residues 64-83 are Cytoplasmic-facing; sequence PNVKKINSTTLYSANLVISD. Residues 84–101 traverse the membrane as a helical segment; it reads ILFTLSLPLRIIYYALGF. Residues 102 to 111 are Extracellular-facing; it reads HWPLGETLCK. Cysteines 110 and 188 form a disulfide. Residues 112–133 traverse the membrane as a helical segment; it reads IVGLIFYINTYAGVNFMTCLSV. The Cytoplasmic segment spans residues 134 to 155; sequence DRFIAVVLPLRFARFRKVSNVR. Residues 156 to 174 traverse the membrane as a helical segment; it reads YICVGVWLLVLMQTLPLLS. Over 175–199 the chain is Extracellular; that stretch reads MPMTNEEPDGFITCMEYPNFEPVPN. Residues 200–222 form a helical membrane-spanning segment; sequence ISYILIGAVFLGYGVPVVTILVC. Over 223–248 the chain is Cytoplasmic; the sequence is YSILCCKLRLAAKANQLTDKSGRSQK. Residues 249 to 272 traverse the membrane as a helical segment; that stretch reads AIGVICCVSLVFVVCFSPYHIDLL. The Extracellular portion of the chain corresponds to 273 to 292; the sequence is QYMIRKLIYTPDCAELTAFQ. A helical transmembrane segment spans residues 293–317; sequence ISLHFTVCLMNLNSCLDPFIYFFAC. Over 318–366 the chain is Cytoplasmic; the sequence is KGYKTKVLKILKRQVSVSFSSAARTLPEGLSRDISDGNKIHLNSTRHKE.

This sequence belongs to the G-protein coupled receptor 1 family.

The protein resides in the cell membrane. In terms of biological role, G-protein coupled receptor expressed in lymphocytes that acts as a chemotactic receptor for B-cells, T-cells, splenic dendritic cells, monocytes/macrophages and astrocytes. Receptor for oxysterol 7-alpha,25-dihydroxycholesterol (7-alpha,25-OHC) and other related oxysterols. Mediates cell positioning and movement of a number of cells by binding the 7-alpha,25-OHC ligand that forms a chemotactic gradient. Binding of 7-alpha,25-OHC mediates the correct localization of B-cells during humoral immune responses. The polypeptide is G-protein coupled receptor 183 (gpr183) (Salmo salar (Atlantic salmon)).